Here is a 473-residue protein sequence, read N- to C-terminus: Cephalotoxin-like protein (473 aa).

Positions 1–21 are cleaved as a signal peptide; it reads RWLGWQKFCWISCLFSSISSG. Coiled-coil stretches lie at residues 40–60 and 116–147; these read AINA…EALK and LINE…ADTA.

As to expression, component of the acid-insoluble and acid-soluble organic matrix of the aragonitic skeleton (at protein level).

The protein resides in the secreted. The polypeptide is Cephalotoxin-like protein (Acropora millepora (Staghorn coral)).